A 416-amino-acid chain; its full sequence is Gamma-glutamyl phosphate reductase (416 aa).

It belongs to the gamma-glutamyl phosphate reductase family.

It localises to the cytoplasm. It catalyses the reaction L-glutamate 5-semialdehyde + phosphate + NADP(+) = L-glutamyl 5-phosphate + NADPH + H(+). It functions in the pathway amino-acid biosynthesis; L-proline biosynthesis; L-glutamate 5-semialdehyde from L-glutamate: step 2/2. In terms of biological role, catalyzes the NADPH-dependent reduction of L-glutamate 5-phosphate into L-glutamate 5-semialdehyde and phosphate. The product spontaneously undergoes cyclization to form 1-pyrroline-5-carboxylate. This Leptospira interrogans serogroup Icterohaemorrhagiae serovar Lai (strain 56601) protein is Gamma-glutamyl phosphate reductase.